The following is a 675-amino-acid chain: Vitamin K-dependent protein S (675 aa).

Positions M1–T24 are cleaved as a signal peptide. Positions N25–R41 are excised as a propeptide. The Gla domain occupies A42–G87. 11 positions are modified to 4-carboxyglutamate: E47, E48, E55, E57, E60, E61, E66, E67, E70, E73, and E77. Residues C58 and C63 are joined by a disulfide bond. The interval C88–A116 is thrombin-sensitive. The EGF-like 1 domain maps to I117–Q155. Intrachain disulfides connect C121-C134, C126-C143, C145-C154, C161-C175, C171-C184, C186-C199, C205-C217, C212-C226, C228-C241, C247-C256, C252-C265, C267-C282, and C449-C475. A (3R)-3-hydroxyaspartate modification is found at D136. One can recognise an EGF-like 2; calcium-binding domain in the interval D157–K200. In terms of domain architecture, EGF-like 3; calcium-binding spans D201–K242. The region spanning D243–E283 is the EGF-like 4; calcium-binding domain. Laminin G-like domains lie at L299–C475 and Y484–C665. N499 and N509 each carry an N-linked (GlcNAc...) asparagine glycan. C638 and C665 are joined by a disulfide.

The iron and 2-oxoglutarate dependent 3-hydroxylation of aspartate and asparagine is (R) stereospecific within EGF domains. In terms of tissue distribution, plasma.

It is found in the secreted. In terms of biological role, anticoagulant plasma protein; it is a cofactor to activated protein C in the degradation of coagulation factors Va and VIIIa. It helps to prevent coagulation and stimulating fibrinolysis. This Mus musculus (Mouse) protein is Vitamin K-dependent protein S (Pros1).